The primary structure comprises 206 residues: Guanylate kinase (206 aa).

The Guanylate kinase-like domain occupies 13-193; that stretch reads PLLLVVSGPS…AVSEIMSIIS (181 aa). An ATP-binding site is contributed by 20–27; the sequence is GPSGVGKD.

The protein belongs to the guanylate kinase family.

It localises to the cytoplasm. It catalyses the reaction GMP + ATP = GDP + ADP. Essential for recycling GMP and indirectly, cGMP. The protein is Guanylate kinase of Dehalococcoides mccartyi (strain ATCC BAA-2266 / KCTC 15142 / 195) (Dehalococcoides ethenogenes (strain 195)).